Here is a 379-residue protein sequence, read N- to C-terminus: Bifunctional enzyme IspD/IspF (379 aa).

Residues Met1–Val223 form a 2-C-methyl-D-erythritol 4-phosphate cytidylyltransferase region. Residues Arg224 to Ala379 are 2-C-methyl-D-erythritol 2,4-cyclodiphosphate synthase. A divalent metal cation-binding residues include Asp230 and His232. Residues Asp230–His232 and His256–Ser257 each bind 4-CDP-2-C-methyl-D-erythritol 2-phosphate. Residue His264 participates in a divalent metal cation binding. 4-CDP-2-C-methyl-D-erythritol 2-phosphate-binding positions include Asp278 to Gly280, Thr354 to Glu357, Phe361, and Arg364.

The protein in the N-terminal section; belongs to the IspD/TarI cytidylyltransferase family. IspD subfamily. This sequence in the C-terminal section; belongs to the IspF family. Requires a divalent metal cation as cofactor.

It carries out the reaction 2-C-methyl-D-erythritol 4-phosphate + CTP + H(+) = 4-CDP-2-C-methyl-D-erythritol + diphosphate. It catalyses the reaction 4-CDP-2-C-methyl-D-erythritol 2-phosphate = 2-C-methyl-D-erythritol 2,4-cyclic diphosphate + CMP. Its pathway is isoprenoid biosynthesis; isopentenyl diphosphate biosynthesis via DXP pathway; isopentenyl diphosphate from 1-deoxy-D-xylulose 5-phosphate: step 2/6. It functions in the pathway isoprenoid biosynthesis; isopentenyl diphosphate biosynthesis via DXP pathway; isopentenyl diphosphate from 1-deoxy-D-xylulose 5-phosphate: step 4/6. Bifunctional enzyme that catalyzes the formation of 4-diphosphocytidyl-2-C-methyl-D-erythritol from CTP and 2-C-methyl-D-erythritol 4-phosphate (MEP) (IspD), and catalyzes the conversion of 4-diphosphocytidyl-2-C-methyl-D-erythritol 2-phosphate (CDP-ME2P) to 2-C-methyl-D-erythritol 2,4-cyclodiphosphate (ME-CPP) with a corresponding release of cytidine 5-monophosphate (CMP) (IspF). This is Bifunctional enzyme IspD/IspF from Rhodobacter capsulatus (strain ATCC BAA-309 / NBRC 16581 / SB1003).